The primary structure comprises 1060 residues: Valine--tRNA ligase, mitochondrial (1060 aa).

The N-terminal 15 residues, 1–15 (MPHLPLASFRPPLWG), are a transit peptide targeting the mitochondrion. The interval 25–50 (PQALCTQPEPHGSPVSRRNREAKQKR) is disordered. Residues 146–156 (PNVTGSLHIGH) carry the 'HIGH' region motif. An N6-acetyllysine modification is found at K548. The 'KMSKS' region signature appears at 659-663 (KMSKS). K662 is an ATP binding site.

Belongs to the class-I aminoacyl-tRNA synthetase family.

It localises to the mitochondrion. The catalysed reaction is tRNA(Val) + L-valine + ATP = L-valyl-tRNA(Val) + AMP + diphosphate. Its function is as follows. Catalyzes the attachment of valine to tRNA(Val) in a two-step reaction: valine is first activated by ATP to form Val-AMP and then transferred to the acceptor end of tRNA(Val). The sequence is that of Valine--tRNA ligase, mitochondrial (Vars2) from Mus musculus (Mouse).